Reading from the N-terminus, the 511-residue chain is Phospho-2-dehydro-3-deoxyheptonate aldolase 2, chloroplastic (511 aa).

Belongs to the class-II DAHP synthase family. In terms of tissue distribution, leaves, stems, tuber and roots.

Its subcellular location is the plastid. It localises to the chloroplast. The catalysed reaction is D-erythrose 4-phosphate + phosphoenolpyruvate + H2O = 7-phospho-2-dehydro-3-deoxy-D-arabino-heptonate + phosphate. It functions in the pathway metabolic intermediate biosynthesis; chorismate biosynthesis; chorismate from D-erythrose 4-phosphate and phosphoenolpyruvate: step 1/7. The polypeptide is Phospho-2-dehydro-3-deoxyheptonate aldolase 2, chloroplastic (SHKB) (Solanum tuberosum (Potato)).